We begin with the raw amino-acid sequence, 202 residues long: Apolipoprotein R (202 aa).

The first 28 residues, 1 to 28 (MPPNLQRIFPALCLLGVLFLLHCTPVLC), serve as a signal peptide directing secretion. Sushi domains follow at residues 29 to 87 (GCDN…QCKA) and 88 to 145 (LCPK…KCEW). 4 cysteine pairs are disulfide-bonded: Cys-30-Cys-73, Cys-59-Cys-85, Cys-89-Cys-130, and Cys-116-Cys-143.

Forms high molecular weight disulfide-linked complexes. In terms of tissue distribution, plasma. Found on very low-density lipoprotein (VLDL), on chylomicrons, and in the D &gt; 1.21 g/ml fraction of pig plasma. Found in liver, spleen, lung, bone marrow and lymph node.

It is found in the secreted. Functionally, may be a lipoprotein-borne regulator of either the coagulation or the complement cascades. The chain is Apolipoprotein R (APOR) from Sus scrofa (Pig).